Reading from the N-terminus, the 197-residue chain is uncharacterized protein (197 aa).

Residues 1–31 are disordered; that stretch reads MMHFRKKSSISNTSDHDGANRASDVKISEDD. Phosphoserine occurs at positions 11 and 23. The segment covering 14–31 has biased composition (basic and acidic residues); the sequence is SDHDGANRASDVKISEDD. Residues K26 and K32 each participate in a glycyl lysine isopeptide (Lys-Gly) (interchain with G-Cter in ubiquitin) cross-link. The segment at 157–197 is disordered; that stretch reads VGGASSQMYGEQAVYQPQQHVQTEEKQKKKKKGLFGRMKKK. Residues 158–177 are compositionally biased toward polar residues; that stretch reads GGASSQMYGEQAVYQPQQHV. The span at 184–197 shows a compositional bias: basic residues; it reads KKKKKGLFGRMKKK.

This sequence to yeast YGR273c.

This is an uncharacterized protein from Saccharomyces cerevisiae (strain ATCC 204508 / S288c) (Baker's yeast).